Consider the following 357-residue polypeptide: 3-isopropylmalate dehydrogenase (357 aa).

Residue 76–89 (GPQWDTIDPALRPE) participates in NAD(+) binding. 4 residues coordinate substrate: Arg96, Arg106, Arg134, and Asp224. Residues Asp224, Asp248, and Asp252 each contribute to the Mg(2+) site. An NAD(+)-binding site is contributed by 282 to 294 (GSAPDIAGKGIAN).

It belongs to the isocitrate and isopropylmalate dehydrogenases family. LeuB type 1 subfamily. As to quaternary structure, homodimer. Requires Mg(2+) as cofactor. The cofactor is Mn(2+).

The protein resides in the cytoplasm. The catalysed reaction is (2R,3S)-3-isopropylmalate + NAD(+) = 4-methyl-2-oxopentanoate + CO2 + NADH. Its pathway is amino-acid biosynthesis; L-leucine biosynthesis; L-leucine from 3-methyl-2-oxobutanoate: step 3/4. In terms of biological role, catalyzes the oxidation of 3-carboxy-2-hydroxy-4-methylpentanoate (3-isopropylmalate) to 3-carboxy-4-methyl-2-oxopentanoate. The product decarboxylates to 4-methyl-2 oxopentanoate. This Xanthomonas axonopodis pv. citri (strain 306) protein is 3-isopropylmalate dehydrogenase.